We begin with the raw amino-acid sequence, 308 residues long: Oxygen-dependent coproporphyrinogen-III oxidase (308 aa).

Residue Ser-100 coordinates substrate. A divalent metal cation contacts are provided by His-104 and His-114. His-114 functions as the Proton donor in the catalytic mechanism. 116–118 (NFR) provides a ligand contact to substrate. Residues His-153 and His-183 each coordinate a divalent metal cation. The important for dimerization stretch occupies residues 248-283 (YVEFNLVFDRGTIFGLQSGGRTESILSSMPPIATWK). Residue 266–268 (GGR) coordinates substrate.

The protein belongs to the aerobic coproporphyrinogen-III oxidase family. Homodimer. Requires a divalent metal cation as cofactor.

It localises to the cytoplasm. It catalyses the reaction coproporphyrinogen III + O2 + 2 H(+) = protoporphyrinogen IX + 2 CO2 + 2 H2O. It participates in porphyrin-containing compound metabolism; protoporphyrin-IX biosynthesis; protoporphyrinogen-IX from coproporphyrinogen-III (O2 route): step 1/1. Functionally, involved in the heme biosynthesis. Catalyzes the aerobic oxidative decarboxylation of propionate groups of rings A and B of coproporphyrinogen-III to yield the vinyl groups in protoporphyrinogen-IX. This chain is Oxygen-dependent coproporphyrinogen-III oxidase, found in Francisella tularensis subsp. tularensis (strain FSC 198).